A 251-amino-acid polypeptide reads, in one-letter code: Ubiquinone/menaquinone biosynthesis C-methyltransferase UbiE (251 aa).

Residues threonine 74, aspartate 95, and 123–124 (NA) each bind S-adenosyl-L-methionine.

The protein belongs to the class I-like SAM-binding methyltransferase superfamily. MenG/UbiE family.

It carries out the reaction a 2-demethylmenaquinol + S-adenosyl-L-methionine = a menaquinol + S-adenosyl-L-homocysteine + H(+). The enzyme catalyses a 2-methoxy-6-(all-trans-polyprenyl)benzene-1,4-diol + S-adenosyl-L-methionine = a 5-methoxy-2-methyl-3-(all-trans-polyprenyl)benzene-1,4-diol + S-adenosyl-L-homocysteine + H(+). It functions in the pathway quinol/quinone metabolism; menaquinone biosynthesis; menaquinol from 1,4-dihydroxy-2-naphthoate: step 2/2. It participates in cofactor biosynthesis; ubiquinone biosynthesis. Functionally, methyltransferase required for the conversion of demethylmenaquinol (DMKH2) to menaquinol (MKH2) and the conversion of 2-polyprenyl-6-methoxy-1,4-benzoquinol (DDMQH2) to 2-polyprenyl-3-methyl-6-methoxy-1,4-benzoquinol (DMQH2). This chain is Ubiquinone/menaquinone biosynthesis C-methyltransferase UbiE, found in Shewanella piezotolerans (strain WP3 / JCM 13877).